The chain runs to 78 residues: MSNIEERVKKIIVEQLGVDEAEVKNESSFVEDLGADSLDTVELVMALEEEFDTEIPDEEAEKITTVQAAIDYVTSNAQ.

The Carrier domain occupies 2–77 (SNIEERVKKI…AAIDYVTSNA (76 aa)). O-(pantetheine 4'-phosphoryl)serine is present on Ser-37.

The protein belongs to the acyl carrier protein (ACP) family. Post-translationally, 4'-phosphopantetheine is transferred from CoA to a specific serine of apo-ACP by AcpS. This modification is essential for activity because fatty acids are bound in thioester linkage to the sulfhydryl of the prosthetic group.

It localises to the cytoplasm. It participates in lipid metabolism; fatty acid biosynthesis. Carrier of the growing fatty acid chain in fatty acid biosynthesis. The chain is Acyl carrier protein from Vibrio cholerae serotype O1 (strain ATCC 39315 / El Tor Inaba N16961).